The following is a 74-amino-acid chain: Small ribosomal subunit protein uS15 (74 aa).

Belongs to the universal ribosomal protein uS15 family. As to quaternary structure, part of the 30S ribosomal subunit. Forms a bridge to the 50S subunit in the 70S ribosome, contacting the 23S rRNA.

Its function is as follows. One of the primary rRNA binding proteins, it binds directly to 16S rRNA where it helps nucleate assembly of the platform of the 30S subunit by binding and bridging several RNA helices of the 16S rRNA. Functionally, forms an intersubunit bridge (bridge B4) with the 23S rRNA of the 50S subunit in the ribosome. This is Small ribosomal subunit protein uS15 from Onion yellows phytoplasma (strain OY-M).